The chain runs to 1099 residues: Sterol regulatory element-binding protein 2 (1099 aa).

The tract at residues 1–47 is transcriptional activation (acidic); sequence MDASEFMDTMDPSLSELGDEFTLGDIDEMLQFVSNQVDFPDIFEDQM. Residues 1–461 lie on the Cytoplasmic side of the membrane; the sequence is MDASEFMDTM…SCVGVMDRSR (461 aa). Positions 65–107 are disordered; that stretch reads LTPPHTPVQTSSQTHTQTLTQAHTQTHTQTHTQTRTPPVLQPR. Residues 71 to 100 show a composition bias toward low complexity; it reads PVQTSSQTHTQTLTQAHTQTHTQTHTQTRT. Residues 320-370 enclose the bHLH domain; sequence ERRTTHNIIEKRYRSSINDKILELRDLVLGNDAKMHKSGVLRKAIDYIKYL. The segment at 370–391 is leucine-zipper; the sequence is LQQVNHKLRQENLTLKMANQKN. The helical transmembrane segment at 462-482 threads the bilayer; the sequence is LLLCALSFLCLSLNPLPSLLG. Residues 483–513 lie on the Lumenal side of the membrane; that stretch reads AEAPAGSPEVAGHGPTRTLFSLPAQTQSFGA. Residues 514–534 traverse the membrane as a helical segment; it reads WLWCVLPFLLVWVVSGVGVVW. Topologically, residues 535–1099 are cytoplasmic; that stretch reads GCVRVLYLWE…LSGGTTIAAS (565 aa).

Belongs to the SREBP family. As to quaternary structure, forms a tight complex with scap, the SCAP-SREBP complex, in the endoplasmic reticulum membrane. Homodimer; efficient DNA binding of the soluble transcription factor fragment requires dimerization with another bHLH protein. Post-translationally, processed in the Golgi apparatus, releasing the protein from the membrane. At low cholesterol the SCAP-SREBP complex is recruited into COPII vesicles for export from the endoplasmic reticulum. In the Golgi, complex SREBPs are cleaved sequentially by site-1 (mbtps1, S1P) and site-2 (mbtps2, S2P) protease. The first cleavage by site-1 protease occurs within the luminal loop, the second cleavage by site-2 protease occurs within the first transmembrane domain, releasing the transcription factor from the Golgi membrane.

It localises to the endoplasmic reticulum membrane. The protein resides in the golgi apparatus membrane. Its subcellular location is the cytoplasmic vesicle. The protein localises to the COPII-coated vesicle membrane. It is found in the nucleus. Its function is as follows. Precursor of the transcription factor form (Processed sterol regulatory element-binding protein 2), which is embedded in the endoplasmic reticulum membrane. Low sterol concentrations promote processing of this form, releasing the transcription factor form that translocates into the nucleus and activates transcription of genes involved in cholesterol biosynthesis. In terms of biological role, key transcription factor that regulates expression of genes involved in cholesterol biosynthesis. Binds to the sterol regulatory element 1 (SRE-1) (5'-ATCACCCCAC-3'). Has dual sequence specificity binding to both an E-box motif (5'-ATCACGTGA-3') and to SRE-1 (5'-ATCACCCCAC-3'). Regulates transcription of genes related to cholesterol synthesis pathway. Activated by mediated cholesterol efflux, transactivates NOTCH and promotes hematopoietic stem and progenitor cell emergence. The chain is Sterol regulatory element-binding protein 2 from Danio rerio (Zebrafish).